Here is a 596-residue protein sequence, read N- to C-terminus: Endoribonuclease ZC3H12A (596 aa).

Disordered regions lie at residues 1–48 (MSDP…TSEL) and 97–134 (QALTAPSPQPPLVPRGGSTPKPSTLEPSLPEEDREGSD). The segment covering 10–19 (VQESNPTMSL) has biased composition (polar residues). Positions 42 to 87 (EAPTSELQMKVDFFRKLGYSSSEIHSVLQKLGVQADTNTVLGELVK) are ubiquitin association domain. The interval 81 to 150 (VLGELVKHGS…DGSNVAMSHG (70 aa)) is necessary for interaction with TANK. The interval 112-281 (GGSTPKPSTL…DKFMPPDDPL (170 aa)) is RNase. Residues 135-290 (LRPVVIDGSN…LGRHGPSLDN (156 aa)) form the RNase NYN domain. Residues 214 to 220 (RRVGGKR) are RNA binding. Aspartate 226 contributes to the Mg(2+) binding site. Disordered regions lie at residues 278 to 306 (DDPLGRHGPSLDNFLRKKPLPSEHRKQPC) and 340 to 417 (NALL…PTEW). The C3H1-type zinc-finger motif lies at 301–324 (HRKQPCPYGKKCTYGIKCRFFHPE). The tract at residues 301–454 (HRKQPCPYGK…SELWGVRGGS (154 aa)) is necessary for interaction with ZC3H12D. Phosphoserine is present on serine 344. Over residues 356-368 (QRPSPASQSSSVS) the composition is skewed to low complexity. A phosphoserine mark is found at serine 435 and serine 439. The disordered stretch occupies residues 511 to 543 (YWSEPYPLPPPTPVLQEPQRPSPGAGGGPWGRV). A compositionally biased stretch (low complexity) spans 524–533 (VLQEPQRPSP).

This sequence belongs to the ZC3H12 family. Oligomer. Found in a deubiquitination complex with TANK, USP10 and ZC3H12A; this complex inhibits genotoxic stress- or interleukin-1-beta-mediated NF-kappaB activation by promoting IKBKG or TRAF6 deubiquitination. Interacts with IKBKG; this interaction increases in response to DNA damage. Interacts with TANK; this interaction increases in response to DNA damage and serves as a bridge to anchor both TANK and USP10 into a deubiquitinating complex. Interacts with TRAF6; this interaction increases in response to DNA damage and is stimulated by TANK. Interacts with USP10; this interaction increases in response to DNA damage and serves as a bridge to anchor both TANK and USP10 into a deubiquitinating complex. Interacts with ZC3H12D. Interacts with TNRC6A. Interacts with IKBKB/IKKB. Interacts with IKBKB/IKKB. Interacts with IKBKB/IKKB. Interacts with BTRC; the interaction occurs when ZC3H12A is phosphorylated in a IKBKB/IKKB-dependent manner. Interacts with IRAK1; this interaction increases the interaction between ZC3H12A and IKBKB/IKKB. Interacts with UPF1; this interaction occurs in a mRNA translationally active- and termination-dependent manner and is essential for ZC3H12A-mediated degradation of target mRNAs. Associates with ribosomes. Interacts with ubiquitin. It depends on Mg(2+) as a cofactor. In terms of processing, proteolytically cleaved between Arg-111 and Arg-214 by MALT1 in activated T-cells; cleavage at Arg-111 is critical for promoting ZC3H12A degradation in response to T-cell receptor (TCR) stimulation, and hence is necessary for prolonging the stability of a set of mRNAs controlling T-cell activation and Th17 cell differentiation. Phosphorylated by IRAK1; phosphorylation is necessary for subsequent phosphorylation by the I-kappa-B-kinase (IKK) complex. Phosphorylated by I-kappa-B-kinases (IKKs) at Ser-435 and Ser-439 upon lipopolysaccharide (LPS) or IL1B stimulation in macrophages through the MyD88-dependent signaling pathway; these phosphorylations promote rapid ubiquitin proteasome-mediated degradation of ZC3H12A in macrophages and hence allows its target mRNAs, such as IL6, to escape from degradation and accumulate during the inflammatory response. Post-translationally, ubiquitinated; ubiquitination is induced in response to interleukin IL1 receptor stimuli in a IKBKB/IKKB and IRAK1-dependent manner, leading to proteasome-mediated degradation. As to expression, expressed in CD4(+) helper T-cells (at protein level). Highly expressed in macrophages. Expressed in lung, lymph nodes, spleen and thymus. Expressed weakly in heart. Expressed weakly in cardiomyocytes (at protein level). Expressed in spleen, lung, intestine, brown adipose tissue and thymus. Weakly expressed in the heart. Weakly expressed in cardiomyocytes.

It localises to the nucleus. It is found in the cytoplasm. Its subcellular location is the rough endoplasmic reticulum membrane. The protein resides in the cytoplasmic granule. The protein localises to the P-body. Its function is as follows. Endoribonuclease involved in various biological functions such as cellular inflammatory response and immune homeostasis, glial differentiation of neuroprogenitor cells, cell death of cardiomyocytes, adipogenesis and angiogenesis. Functions as an endoribonuclease involved in mRNA decay. Modulates the inflammatory response by promoting the degradation of a set of translationally active cytokine-induced inflammation-related mRNAs, such as IL6 and IL12B, during the early phase of inflammation. Prevents aberrant T-cell-mediated immune reaction by degradation of multiple mRNAs controlling T-cell activation, such as those encoding cytokines (IL6 and IL2), cell surface receptors (ICOS, TNFRSF4 and TNFR2) and transcription factor (REL). Inhibits cooperatively with ZC3H12A the differentiation of helper T cells Th17 in lungs. They repress target mRNA encoding the Th17 cell-promoting factors IL6, ICOS, REL, IRF4, NFKBID and NFKBIZ. The cooperation requires RNA-binding by RC3H1 and the nuclease activity of ZC3H12A. Together with RC3H1, destabilizes TNFRSF4/OX40 mRNA by binding to the conserved stem loop structure in its 3'UTR. Self regulates by destabilizing its own mRNA. Cleaves mRNA harboring a stem-loop (SL), often located in their 3'-UTRs, during the early phase of inflammation in a helicase UPF1-dependent manner. Plays a role in the inhibition of microRNAs (miRNAs) biogenesis. Cleaves the terminal loop of a set of precursor miRNAs (pre-miRNAs) important for the regulation of the inflammatory response leading to their degradation, and thus preventing the biosynthesis of mature miRNAs. Also plays a role in promoting angiogenesis in response to inflammatory cytokines by inhibiting the production of antiangiogenic microRNAs via its anti-dicer RNase activity. Affects the overall ubiquitination of cellular proteins. Positively regulates deubiquitinase activity promoting the cleavage at 'Lys-48'- and 'Lys-63'-linked polyubiquitin chains on TNF receptor-associated factors (TRAFs), preventing JNK and NF-kappa-B signaling pathway activation, and hence negatively regulating macrophage-mediated inflammatory response and immune homeostasis. Induces also deubiquitination of the transcription factor HIF1A, probably leading to its stabilization and nuclear import, thereby positively regulating the expression of proangiogenic HIF1A-targeted genes. Involved in a TANK-dependent negative feedback response to attenuate NF-kappaB activation through the deubiquitination of IKBKG or TRAF6 in response to interleukin-1-beta (IL1B) stimulation or upon DNA damage. Prevents stress granules (SGs) formation and promotes macrophage apoptosis under stress conditions, including arsenite-induced oxidative stress, heat shock, and energy deprivation. Plays a role in the regulation of macrophage polarization; promotes IL4-induced polarization of macrophages M1 into anti-inflammatory M2 state. May also act as a transcription factor that regulates the expression of multiple genes involved in inflammatory response, angiogenesis, adipogenesis and apoptosis. Functions as a positive regulator of glial differentiation of neuroprogenitor cells through an amyloid precursor protein (APP)-dependent signaling pathway. Attenuates septic myocardial contractile dysfunction in response to lipopolysaccharide (LPS) by reducing I-kappa-B-kinase (IKK)-mediated NF-kappa-B activation, and hence myocardial pro-inflammatory cytokine production. The chain is Endoribonuclease ZC3H12A from Mus musculus (Mouse).